A 289-amino-acid chain; its full sequence is Membrane protein insertase YidC (289 aa).

An N-terminal signal peptide occupies residues 1-19 (MKKKALLPLLLGIMVFLAG). A lipid anchor (N-palmitoyl cysteine) is attached at Cys20. Cys20 is lipidated: S-diacylglycerol cysteine. The next 5 membrane-spanning stretches (helical) occupy residues 55 to 75 (YGLA…PFML), 133 to 153 (MLGC…FFVL), 177 to 197 (IWIT…STFS), 210 to 230 (MIIS…ALGL), and 231 to 251 (YWSV…AYYS). Residues 268–289 (EHGGSGNSKGAKVVSKKNKKKK) form a disordered region.

It belongs to the OXA1/ALB3/YidC family. Type 2 subfamily.

It is found in the cell membrane. Functionally, required for the insertion and/or proper folding and/or complex formation of integral membrane proteins into the membrane. Involved in integration of membrane proteins that insert both dependently and independently of the Sec translocase complex, as well as at least some lipoproteins. The sequence is that of Membrane protein insertase YidC from Staphylococcus carnosus (strain TM300).